Reading from the N-terminus, the 196-residue chain is Large ribosomal subunit protein bL9 (196 aa).

It belongs to the bacterial ribosomal protein bL9 family.

Its function is as follows. Binds to the 23S rRNA. The chain is Large ribosomal subunit protein bL9 from Bradyrhizobium sp. (strain ORS 278).